The sequence spans 476 residues: ATP synthase subunit beta (476 aa).

152-159 (GGAGVGKT) lines the ATP pocket.

Belongs to the ATPase alpha/beta chains family. In terms of assembly, F-type ATPases have 2 components, CF(1) - the catalytic core - and CF(0) - the membrane proton channel. CF(1) has five subunits: alpha(3), beta(3), gamma(1), delta(1), epsilon(1). CF(0) has three main subunits: a(1), b(2) and c(9-12). The alpha and beta chains form an alternating ring which encloses part of the gamma chain. CF(1) is attached to CF(0) by a central stalk formed by the gamma and epsilon chains, while a peripheral stalk is formed by the delta and b chains.

Its subcellular location is the cell inner membrane. It catalyses the reaction ATP + H2O + 4 H(+)(in) = ADP + phosphate + 5 H(+)(out). Its function is as follows. Produces ATP from ADP in the presence of a proton gradient across the membrane. The catalytic sites are hosted primarily by the beta subunits. This Acidiphilium cryptum (strain JF-5) protein is ATP synthase subunit beta.